A 624-amino-acid polypeptide reads, in one-letter code: Phosphoenolpyruvate carboxykinase [GTP] (624 aa).

Substrate contacts are provided by residues arginine 88 and 222–224 (YGG). Mn(2+)-binding residues include lysine 231 and histidine 250. Substrate is bound at residue serine 272. Position 273–278 (273–278 (MCGKTS)) interacts with GTP. Cysteine 274 is an active-site residue. Aspartate 291 is a Mn(2+) binding site. Residue 386-388 (NAR) participates in substrate binding. GTP contacts are provided by arginine 388 and arginine 420.

The protein belongs to the phosphoenolpyruvate carboxykinase [GTP] family. Requires Mn(2+) as cofactor.

It localises to the cytoplasm. The catalysed reaction is oxaloacetate + GTP = phosphoenolpyruvate + GDP + CO2. It participates in carbohydrate biosynthesis; gluconeogenesis. In terms of biological role, catalyzes the conversion of oxaloacetate (OAA) to phosphoenolpyruvate (PEP), the rate-limiting step in the metabolic pathway that produces glucose from lactate and other precursors derived from the citric acid cycle. This is Phosphoenolpyruvate carboxykinase [GTP] from Pyrococcus furiosus (strain ATCC 43587 / DSM 3638 / JCM 8422 / Vc1).